The following is a 157-amino-acid chain: GDVDVLKSLSADQKAAIKSSWAAFAADITGNGSNVLVQFFKDYPGDQSYFKKFDGKKPDELKGDAQLATHASQVFGSLNNMIDSMDDPDKMVGLLCKNASDHIPRGVRQQQYKELFSTLMNYMQSLPGANVAGDTKAAWDKALNAMANIIDAEQKRL.

An N-acetylglycine modification is found at G1. A Globin domain is found at 8-155 (SLSADQKAAI…MANIIDAEQK (148 aa)). Heme b is bound by residues H70 and H102.

It belongs to the globin family. As to quaternary structure, monomer.

This chain is Globin, found in Nerita albicilla (Ox-palate nerite).